Here is a 228-residue protein sequence, read N- to C-terminus: GDT1-like protein 5 (228 aa).

Glycine 2 carries the post-translational modification N-acetylglycine. 6 helical membrane passes run 12-32 (LAMT…AILA), 39-59 (LVLA…ATLG), 71-91 (THHI…WDGF), 133-153 (PFLT…NFFG), 173-193 (LGVV…AVLG), and 205-225 (IVAL…LLTP).

The protein belongs to the GDT1 family.

Its subcellular location is the membrane. This chain is GDT1-like protein 5, found in Arabidopsis thaliana (Mouse-ear cress).